Reading from the N-terminus, the 152-residue chain is ARL14 effector protein-like (152 aa).

Residues Met-1–Pro-21 are disordered.

This chain is ARL14 effector protein-like (ARL14EPL), found in Homo sapiens (Human).